A 257-amino-acid chain; its full sequence is Diphthine synthase (257 aa).

Residues Leu-9, Asp-83, Met-86, 111–112 (SI), and Ile-163 contribute to the S-adenosyl-L-methionine site.

Belongs to the diphthine synthase family. As to quaternary structure, homodimer.

The catalysed reaction is 2-[(3S)-amino-3-carboxypropyl]-L-histidyl-[translation elongation factor 2] + 3 S-adenosyl-L-methionine = diphthine-[translation elongation factor 2] + 3 S-adenosyl-L-homocysteine + 3 H(+). Its pathway is protein modification; peptidyl-diphthamide biosynthesis. Its function is as follows. S-adenosyl-L-methionine-dependent methyltransferase that catalyzes the trimethylation of the amino group of the modified target histidine residue in translation elongation factor 2 (EF-2), to form an intermediate called diphthine. The three successive methylation reactions represent the second step of diphthamide biosynthesis. The chain is Diphthine synthase from Thermoplasma acidophilum (strain ATCC 25905 / DSM 1728 / JCM 9062 / NBRC 15155 / AMRC-C165).